Reading from the N-terminus, the 452-residue chain is MDGSETSHSSGLNDFLLRSSVSSGSRSMDVIIYLINDEVIQLTVDGLSVITAHELHKSIREALQLPETAQDVFALWLISPLLEVQLKPKHQPYKVCRQWHDLLARFTNCSSNDILQDEPYLQFRRNIFLPKARELQISHERILYLLYEEAKYNVLEGRYPCDVEDCEVLGGLACRLELGPYNQNEHTPATIRPKLDTLFPPYLCKKRNGGLLTTFKNRGGRQASFEQTVLNTYKEVKETSACTDEQAMKNHYKEYLKKCHELPYYGCAFFQGDVDKPAQGFLNRSGRKAVSVSVNLEGVSVIDRKEKHVLISLTYPELSWDHTYPDEDEHILWLEFDGESEGTPVNKLLKIYSKQAELMSGLIEYCIELSQSTESPASDSTPGNSQLSEKRSKLKRQESVLCNRMKHLTTIDYVEDGAKITRVKPKRTASFFTRQNTHNYSAVQPSETPTES.

Residues 28–374 (MDVIIYLIND…YCIELSQSTE (347 aa)) form the FERM domain. Positions 373-387 (TESPASDSTPGNSQL) are enriched in polar residues. Positions 373–395 (TESPASDSTPGNSQLSEKRSKLK) are disordered.

The protein resides in the cytoplasm. It is found in the cytosol. It localises to the cell membrane. Its function is as follows. Promotes the cell surface stability of RHBDF1 and RHBDF2 and prevents their degradation via the endolysosomal pathway. By acting on RHBDF proteins, involved in ADAM17-mediated ligand shedding. May negatively regulate Wnt signaling. The chain is FERM domain-containing protein 8 (frmd8) from Xenopus laevis (African clawed frog).